The following is a 168-amino-acid chain: Mediator of RNA polymerase II transcription subunit 7b (168 aa).

Over residues 1–12 (MATATYPPPPPY) the composition is skewed to pro residues. The segment at 1–33 (MATATYPPPPPYYRLYKDFSENTDSAPEPPPPI) is disordered. 2 coiled-coil regions span residues 64–92 (KDSNLDYKKELRSLNRELQLHILELADVL) and 132–162 (IMELQIQQRKQAVEDIKRRREEAQGLLKDAF).

The protein belongs to the Mediator complex subunit 7 family. In terms of assembly, component of the Mediator complex. Interacts with MEE14/CBP1.

Its subcellular location is the nucleus. Its function is as follows. Component of the Mediator complex, a coactivator involved in the regulated transcription of nearly all RNA polymerase II-dependent genes. Mediator functions as a bridge to convey information from gene-specific regulatory proteins to the basal RNA polymerase II transcription machinery. The Mediator complex, having a compact conformation in its free form, is recruited to promoters by direct interactions with regulatory proteins and serves for the assembly of a functional pre-initiation complex with RNA polymerase II and the general transcription factors. This Arabidopsis thaliana (Mouse-ear cress) protein is Mediator of RNA polymerase II transcription subunit 7b (MED7B).